The primary structure comprises 67 residues: DNA-directed RNA polymerase subunit omega (67 aa).

Belongs to the RNA polymerase subunit omega family. In terms of assembly, the RNAP catalytic core consists of 2 alpha, 1 beta, 1 beta' and 1 omega subunit. When a sigma factor is associated with the core the holoenzyme is formed, which can initiate transcription.

It carries out the reaction RNA(n) + a ribonucleoside 5'-triphosphate = RNA(n+1) + diphosphate. Functionally, promotes RNA polymerase assembly. Latches the N- and C-terminal regions of the beta' subunit thereby facilitating its interaction with the beta and alpha subunits. This Burkholderia ambifaria (strain ATCC BAA-244 / DSM 16087 / CCUG 44356 / LMG 19182 / AMMD) (Burkholderia cepacia (strain AMMD)) protein is DNA-directed RNA polymerase subunit omega.